The chain runs to 152 residues: MFRGATTLSLDSKGRLAIPAKYRHALSLDCEGKMVCTIDIKQPCLLLYPLPEWQIIEQKLTRLSSMNPAERRLQRLLLGHADDCEMDKNGRLLLSAPLRQHAGLEKKLMLVGQLNKFEVWNEDAWHEQVAQDMDVEREGDFTLNERLEDFSL.

2 consecutive SpoVT-AbrB domains span residues 5–52 and 81–124; these read ATTL…PLPE and ADDC…NEDA.

This sequence belongs to the MraZ family. Forms oligomers.

The protein resides in the cytoplasm. The protein localises to the nucleoid. The polypeptide is Transcriptional regulator MraZ (Idiomarina loihiensis (strain ATCC BAA-735 / DSM 15497 / L2-TR)).